The following is a 106-amino-acid chain: Venom family 8-like peptide Pr8a (106 aa).

Positions 1–17 are cleaved as a signal peptide; the sequence is MSPIAFLLPFLLQMVLS.

Contains 2 disulfide bonds. As to expression, expressed by the venom gland (anterior main gland) (at protein level).

It is found in the secreted. The protein is Venom family 8-like peptide Pr8a of Platymeris rhadamanthus (Red spot assassin bug).